We begin with the raw amino-acid sequence, 185 residues long: NEDD8-conjugating enzyme UBE2F (185 aa).

Positions 1-29 are interaction with UBA3; that stretch reads MLTLASKLKRDDGVRGPRASNPASDSTRR. The tract at residues 11 to 30 is disordered; it reads DDGVRGPRASNPASDSTRRV. The UBC core domain occupies 32-185; sequence VRDKLLVKEV…VEDYIKRYAR (154 aa). C116 acts as the Glycyl thioester intermediate in catalysis.

It belongs to the ubiquitin-conjugating enzyme family. UBE2F subfamily.

The catalysed reaction is [E1 NEDD8-activating enzyme]-S-[NEDD8 protein]-yl-L-cysteine + [E2 NEDD8-conjugating enzyme]-L-cysteine = [E1 NEDD8-activating enzyme]-L-cysteine + [E2 NEDD8-conjugating enzyme]-S-[NEDD8-protein]-yl-L-cysteine.. Its pathway is protein modification; protein neddylation. Its function is as follows. Accepts the ubiquitin-like protein NEDD8 from the UBA3-NAE1 E1 complex and catalyzes its covalent attachment to other proteins. Together with the E3 ubiquitin ligase RNF7/RBX2, specifically neddylates cullin-5 (CUL5). Does not neddylate CUL1, CUL2, CUL3, CUL4A or CUL4B. The protein is NEDD8-conjugating enzyme UBE2F (UBE2F) of Gallus gallus (Chicken).